The following is a 303-amino-acid chain: uncharacterized protein (303 aa).

The region spanning 15-74 is the S4 RNA-binding domain; sequence ERIDKFLASTENDWSRTQVQQWVKDGQVVVNGSAVKANYKIQPGDQVTVTVPEPEALDVL. Residue Asp138 is part of the active site.

It belongs to the pseudouridine synthase RluA family.

It catalyses the reaction a uridine in RNA = a pseudouridine in RNA. This is an uncharacterized protein from Bacillus subtilis (strain 168).